The following is an 889-amino-acid chain: DNA gyrase subunit A (889 aa).

The region spanning 35 to 501 is the Topo IIA-type catalytic domain; the sequence is LPDVRDGLKP…GFEDLEDEDL (467 aa). The active-site O-(5'-phospho-DNA)-tyrosine intermediate is the tyrosine 123. Positions 528 to 534 match the GyrA-box motif; sequence QNRGGRG. Residues 810 to 889 form a disordered region; it reads VKEDAEDETN…IQQSSDEDEE (80 aa). Residues 813-823 are compositionally biased toward acidic residues; the sequence is DAEDETNEDEQ. Positions 863-875 are enriched in basic and acidic residues; it reads DGRIEVRQDFMDR. Residues 876 to 889 are compositionally biased toward acidic residues; it reads VEEDIQQSSDEDEE.

It belongs to the type II topoisomerase GyrA/ParC subunit family. In terms of assembly, heterotetramer, composed of two GyrA and two GyrB chains. In the heterotetramer, GyrA contains the active site tyrosine that forms a transient covalent intermediate with DNA, while GyrB binds cofactors and catalyzes ATP hydrolysis.

It localises to the cytoplasm. The catalysed reaction is ATP-dependent breakage, passage and rejoining of double-stranded DNA.. Its function is as follows. A type II topoisomerase that negatively supercoils closed circular double-stranded (ds) DNA in an ATP-dependent manner to modulate DNA topology and maintain chromosomes in an underwound state. Negative supercoiling favors strand separation, and DNA replication, transcription, recombination and repair, all of which involve strand separation. Also able to catalyze the interconversion of other topological isomers of dsDNA rings, including catenanes and knotted rings. Type II topoisomerases break and join 2 DNA strands simultaneously in an ATP-dependent manner. In Staphylococcus aureus (strain N315), this protein is DNA gyrase subunit A.